The sequence spans 312 residues: Aspartate carbamoyltransferase catalytic subunit (312 aa).

Residues arginine 58 and threonine 59 each coordinate carbamoyl phosphate. Lysine 86 contacts L-aspartate. Carbamoyl phosphate contacts are provided by arginine 108, histidine 136, and glutamine 139. L-aspartate-binding residues include arginine 169 and arginine 223. Carbamoyl phosphate-binding residues include glycine 264 and proline 265.

This sequence belongs to the aspartate/ornithine carbamoyltransferase superfamily. ATCase family. As to quaternary structure, heterododecamer (2C3:3R2) of six catalytic PyrB chains organized as two trimers (C3), and six regulatory PyrI chains organized as three dimers (R2).

It carries out the reaction carbamoyl phosphate + L-aspartate = N-carbamoyl-L-aspartate + phosphate + H(+). It functions in the pathway pyrimidine metabolism; UMP biosynthesis via de novo pathway; (S)-dihydroorotate from bicarbonate: step 2/3. In terms of biological role, catalyzes the condensation of carbamoyl phosphate and aspartate to form carbamoyl aspartate and inorganic phosphate, the committed step in the de novo pyrimidine nucleotide biosynthesis pathway. The sequence is that of Aspartate carbamoyltransferase catalytic subunit from Desulfitobacterium hafniense (strain DSM 10664 / DCB-2).